The chain runs to 399 residues: Elongation factor Tu 1 (399 aa).

Residues 17-208 (KPHVNVGTIG…LDDYVEVPPR (192 aa)) form the tr-type G domain. A G1 region spans residues 26-33 (GHVDHGKT). GTP is bound at residue 26 to 33 (GHVDHGKT). T33 is a Mg(2+) binding site. The interval 62-66 (GITIA) is G2. The tract at residues 83 to 86 (DCPG) is G3. Residues 83-87 (DCPGH) and 138-141 (NKAD) each bind GTP. The G4 stretch occupies residues 138-141 (NKAD). Positions 175–177 (SAL) are G5.

It belongs to the TRAFAC class translation factor GTPase superfamily. Classic translation factor GTPase family. EF-Tu/EF-1A subfamily. Monomer.

The protein resides in the cytoplasm. It catalyses the reaction GTP + H2O = GDP + phosphate + H(+). GTP hydrolase that promotes the GTP-dependent binding of aminoacyl-tRNA to the A-site of ribosomes during protein biosynthesis. This Wolbachia sp. subsp. Brugia malayi (strain TRS) protein is Elongation factor Tu 1.